The primary structure comprises 424 residues: Glutamate-1-semialdehyde 2,1-aminomutase (424 aa).

Lys-268 is modified (N6-(pyridoxal phosphate)lysine).

This sequence belongs to the class-III pyridoxal-phosphate-dependent aminotransferase family. HemL subfamily. Pyridoxal 5'-phosphate serves as cofactor.

The protein resides in the cytoplasm. The catalysed reaction is (S)-4-amino-5-oxopentanoate = 5-aminolevulinate. It participates in porphyrin-containing compound metabolism; protoporphyrin-IX biosynthesis; 5-aminolevulinate from L-glutamyl-tRNA(Glu): step 2/2. This is Glutamate-1-semialdehyde 2,1-aminomutase from Methanosarcina acetivorans (strain ATCC 35395 / DSM 2834 / JCM 12185 / C2A).